Here is a 384-residue protein sequence, read N- to C-terminus: S-adenosylmethionine synthase (384 aa).

Histidine 15 provides a ligand contact to ATP. Mg(2+) is bound at residue aspartate 17. Glutamate 43 contributes to the K(+) binding site. The L-methionine site is built by glutamate 56 and glutamine 99. A flexible loop region spans residues 99 to 109 (QSPDINQGVDR). Residues 164–166 (DAK), 230–231 (RF), aspartate 239, 245–246 (RK), alanine 262, and lysine 266 contribute to the ATP site. Residue aspartate 239 participates in L-methionine binding. Position 270 (lysine 270) interacts with L-methionine.

This sequence belongs to the AdoMet synthase family. As to quaternary structure, homotetramer; dimer of dimers. The cofactor is Mg(2+). It depends on K(+) as a cofactor.

The protein localises to the cytoplasm. It carries out the reaction L-methionine + ATP + H2O = S-adenosyl-L-methionine + phosphate + diphosphate. The protein operates within amino-acid biosynthesis; S-adenosyl-L-methionine biosynthesis; S-adenosyl-L-methionine from L-methionine: step 1/1. Functionally, catalyzes the formation of S-adenosylmethionine (AdoMet) from methionine and ATP. The overall synthetic reaction is composed of two sequential steps, AdoMet formation and the subsequent tripolyphosphate hydrolysis which occurs prior to release of AdoMet from the enzyme. The chain is S-adenosylmethionine synthase from Escherichia coli (strain K12 / DH10B).